Consider the following 187-residue polypeptide: Oligoribonuclease (187 aa).

Positions 7–170 constitute an Exonuclease domain; sequence LCWLDMEMTG…DDILESIEEM (164 aa). The active site involves tyrosine 128.

This sequence belongs to the oligoribonuclease family.

It is found in the cytoplasm. Functionally, 3'-to-5' exoribonuclease specific for small oligoribonucleotides. The protein is Oligoribonuclease of Neisseria meningitidis serogroup B (strain ATCC BAA-335 / MC58).